We begin with the raw amino-acid sequence, 377 residues long: MKSVALVTEYNPFHNGHLYHAQQSKSITNSDISIAIMSGNFVMRGQPAIYNKFTRAKMALRAVDLVVELPAYASVSAGQYFAKTAVQIADYLNVSHLSFGSESGNMDDFLSLAQSIDKIEQSPLFLEKLKEGKSYPRILSELITDNDLLSSPNNTLGLSYVRAIQTYAPSIQPWTISRFQSAHHDNEISHQTFASGTSIRQSLMNQTDLWKDVVPCEIHKHYERPHISIEDTFNYLKYAILSQDATSLAQIYTMSEGIENRILQTIEQATSFEHLMTLLKTKRYTYTHIQRLLMNILLNFKKHDEPASINAVRILGMSERGQQYLKQIKKSFPERNFVTQVNKQNANLFTNEIHATKIYNLISGQTANDFNTPVIRI.

ATP-binding positions include 7-20 (VTEYNPFHNGHLYH), glycine 100, asparagine 153, and arginine 178.

The protein belongs to the TmcAL family.

It localises to the cytoplasm. The catalysed reaction is cytidine(34) in elongator tRNA(Met) + acetate + ATP = N(4)-acetylcytidine(34) in elongator tRNA(Met) + AMP + diphosphate. Catalyzes the formation of N(4)-acetylcytidine (ac(4)C) at the wobble position of elongator tRNA(Met), using acetate and ATP as substrates. First activates an acetate ion to form acetyladenylate (Ac-AMP) and then transfers the acetyl group to tRNA to form ac(4)C34. In Staphylococcus saprophyticus subsp. saprophyticus (strain ATCC 15305 / DSM 20229 / NCIMB 8711 / NCTC 7292 / S-41), this protein is tRNA(Met) cytidine acetate ligase.